Here is a 357-residue protein sequence, read N- to C-terminus: Acyl-CoA Delta12-desaturase (357 aa).

The next 2 helical transmembrane spans lie at 49-69 and 72-92; these read VLWFVLLHAGALYGVYLIFAS and IYTTLYGFLLCELSLLSITAG. His94, His99, His131, His134, and His135 together coordinate Fe cation. The Histidine box-1 signature appears at 94–99; sequence HRLWAH. A Histidine box-2 motif is present at residues 131–135; sequence HRVHH. Helical transmembrane passes span 195–215 and 223–245; these read LVPFVSFVIPTLIPMYFWGET and STMFRYCLSLNLTWLVNSAAHMW. Positions 243, 272, 275, and 276 each coordinate Fe cation. A Histidine box-3 motif is present at residues 272-276; it reads HNFHH.

Belongs to the fatty acid desaturase type 1 family. Requires Fe(2+) as cofactor.

The protein localises to the membrane. The catalysed reaction is (9Z)-octadecenoyl-CoA + 2 Fe(II)-[cytochrome b5] + O2 + 2 H(+) = (9Z,12Z)-octadecadienoyl-CoA + 2 Fe(III)-[cytochrome b5] + 2 H2O. It catalyses the reaction (9Z)-hexadecenoyl-CoA + 2 Fe(II)-[cytochrome b5] + O2 + 2 H(+) = (9Z,12Z)-hexadecadienoyl-CoA + 2 Fe(III)-[cytochrome b5] + 2 H2O. It carries out the reaction hexadecanoyl-CoA + 2 Fe(II)-[cytochrome b5] + O2 + 2 H(+) = (9Z)-hexadecenoyl-CoA + 2 Fe(III)-[cytochrome b5] + 2 H2O. Catalyzes the formation of a Delta12 double bond, acting on monounsaturated fatty acyl substrates like palmitoleoyl-CoA ((9Z)-hexadecenoyl-CoA) and oleoyl-CoA ((9Z)-octadecenoyl-CoA) with higher desaturation activity on (9Z)-octadecenoyl-CoA than (9Z)-hexadecenoyl-CoA. Requires preexisting cis double bond at the Delta9 position of fatty acyls to be able to insert the Delta12 double bond. Delta12-desaturation of (9Z)-octadecenoyl-CoA in insects produces (9Z,12Z)-octadecadienoyl-CoA (linoleoyl-CoA) which may be used to supply precursors of crucial mediators of immunity and reproduction and other essential functions. Can also catalyze Delta9-desaturation on saturated fatty acyl substrates like palmitoyl-CoA (hexadecanoyl-CoA) but with lower efficiency. This Acheta domesticus (House cricket) protein is Acyl-CoA Delta12-desaturase.